The sequence spans 411 residues: Heparan-sulfate 6-O-sulfotransferase 1 (411 aa).

Residues 11 to 17 (MVERASK) lie on the Cytoplasmic side of the membrane. A helical; Signal-anchor for type II membrane protein transmembrane segment spans residues 18–37 (FVLVVAGSVCFMLILYQYAG). The Lumenal segment spans residues 38–411 (PGLSLGAPGG…DYMSHIIEKW (374 aa)). A 3'-phosphoadenylyl sulfate-binding site is contributed by 93-101 (HIQKTGGTT). Residues 123 to 124 (KK), R140, W145, and H150 each bind substrate. H150 acts as the Proton acceptor in catalysis. Residues R185 and S193 each contribute to the 3'-phosphoadenylyl sulfate site. Substrate-binding residues include H197 and W204. N-linked (GlcNAc...) asparagine glycosylation is present at N264. A 3'-phosphoadenylyl sulfate-binding site is contributed by 317 to 319 (MQY). Residue N320 is glycosylated (N-linked (GlcNAc...) asparagine). 323-324 (RA) is a binding site for 3'-phosphoadenylyl sulfate. Positions 352 to 387 (KDLFQQRYQYKRQLERREQRLRSREERLLHRAKEAL) form a coiled coil.

Belongs to the sulfotransferase 6 family. N-glycosylated. In terms of tissue distribution, expressed in fetal brain.

The protein localises to the membrane. The enzyme catalyses alpha-D-glucosaminyl-[heparan sulfate](n) + 3'-phosphoadenylyl sulfate = 6-sulfo-alpha-D-glucosaminyl-[heparan sulfate](n) + adenosine 3',5'-bisphosphate + H(+). 6-O-sulfation enzyme which catalyzes the transfer of sulfate from 3'-phosphoadenosine 5'-phosphosulfate (PAPS) to position 6 of the N-sulfoglucosamine residue (GlcNS) of heparan sulfate. Critical for normal neuronal development where it may play a role in neuron branching. May also play a role in limb development. May prefer iduronic acid. The sequence is that of Heparan-sulfate 6-O-sulfotransferase 1 from Homo sapiens (Human).